A 474-amino-acid polypeptide reads, in one-letter code: Photosystem II CP43 reaction center protein (474 aa).

Positions 1-14 (MKTLYSLRRFYPVE) are excised as a propeptide. Position 15 is an N-acetylthreonine (T15). Phosphothreonine is present on T15. Transmembrane regions (helical) follow at residues 69–93 (LFEV…PHLA), 134–155 (LLGP…KDRN), 178–201 (KALY…RKIT), 256–276 (KPFA…LSYS), and 292–313 (WFNN…ASQA). E368 is a [CaMn4O5] cluster binding site. The chain crosses the membrane as a helical span at residues 448 to 472 (RARAAAAGFEKGIDRDFEPVLSMTP).

The protein belongs to the PsbB/PsbC family. PsbC subfamily. In terms of assembly, PSII is composed of 1 copy each of membrane proteins PsbA, PsbB, PsbC, PsbD, PsbE, PsbF, PsbH, PsbI, PsbJ, PsbK, PsbL, PsbM, PsbT, PsbX, PsbY, PsbZ, Psb30/Ycf12, at least 3 peripheral proteins of the oxygen-evolving complex and a large number of cofactors. It forms dimeric complexes. Binds multiple chlorophylls and provides some of the ligands for the Ca-4Mn-5O cluster of the oxygen-evolving complex. It may also provide a ligand for a Cl- that is required for oxygen evolution. PSII binds additional chlorophylls, carotenoids and specific lipids. is required as a cofactor.

It localises to the plastid. The protein localises to the chloroplast thylakoid membrane. One of the components of the core complex of photosystem II (PSII). It binds chlorophyll and helps catalyze the primary light-induced photochemical processes of PSII. PSII is a light-driven water:plastoquinone oxidoreductase, using light energy to abstract electrons from H(2)O, generating O(2) and a proton gradient subsequently used for ATP formation. This Citrus sinensis (Sweet orange) protein is Photosystem II CP43 reaction center protein.